A 352-amino-acid chain; its full sequence is Mitochondrial ubiquitin ligase activator of NFKB 1 (352 aa).

Over 1–8 the chain is Cytoplasmic; it reads MESGSRPS. The chain crosses the membrane as a helical span at residues 9 to 29; that stretch reads LGQVILLGTSSMVTAVLYSIY. Residues 30-238 are Mitochondrial intermembrane-facing; the sequence is RQKAQVAQEL…LLHRQESSVR (209 aa). Lysine 52 participates in a covalent cross-link: Glycyl lysine isopeptide (Lys-Gly) (interchain with G-Cter in ubiquitin). A helical membrane pass occupies residues 239–259; sequence LWKILVLVFGFATCATLFFIL. Residues 260–352 lie on the Cytoplasmic side of the membrane; sequence RKQYLHRQER…ITRVIPLYNS (93 aa). Lysine 299 participates in a covalent cross-link: Glycyl lysine isopeptide (Lys-Gly) (interchain with G-Cter in ubiquitin). The segment at 302-340 adopts an RING-type zinc-finger fold; it reads CVVCLSNFKSCVFLECGHVCSCRQCYLALPEPKRCPICR.

As to quaternary structure, homooligomer. Interacts with MAP3K7/TAK1. Interacts with UBC9. Interacts with and sumoylates DNM1L. Interacts with MAVS. Interacts with TP53 (via N-terminus); the interaction leads to ubiquitination and proteasomal degradation of TP53. Post-translationally, ubiquitinated by PRKN during mitophagy, leading to its degradation and enhancement of mitophagy. Deubiquitinated by USP30. In terms of tissue distribution, expressed in cortical neurons (at protein level).

It localises to the mitochondrion outer membrane. It is found in the peroxisome. It catalyses the reaction S-ubiquitinyl-[E2 ubiquitin-conjugating enzyme]-L-cysteine + [acceptor protein]-L-lysine = [E2 ubiquitin-conjugating enzyme]-L-cysteine + N(6)-ubiquitinyl-[acceptor protein]-L-lysine.. It participates in protein modification; protein ubiquitination. Its pathway is protein modification; protein sumoylation. Its function is as follows. Exhibits weak E3 ubiquitin-protein ligase activity. E3 ubiquitin ligases accept ubiquitin from an E2 ubiquitin-conjugating enzyme in the form of a thioester and then directly transfer the ubiquitin to targeted substrates. Can ubiquitinate AKT1 preferentially at 'Lys-284' involving 'Lys-48'-linked polyubiquitination and seems to be involved in regulation of Akt signaling by targeting phosphorylated Akt to proteasomal degradation. Mediates polyubiquitination of cytoplasmic TP53 at 'Lys-27' which targets TP53 for proteasomal degradation, thus reducing TP53 levels in the cytoplasm and mitochondrion. Proposed to preferentially act as a SUMO E3 ligase at physiological concentrations. Plays a role in the control of mitochondrial morphology by promoting mitochondrial fragmentation, and influences mitochondrial localization. Likely to promote mitochondrial fission through negatively regulating the mitochondrial fusion proteins MFN1 and MFN2, acting in a pathway that is parallel to the PRKN/PINK1 regulatory pathway. May also be involved in the sumoylation of the membrane fission protein DNM1L. Inhibits cell growth. When overexpressed, activates JNK through MAP3K7/TAK1 and induces caspase-dependent apoptosis. Involved in the modulation of innate immune defense against viruses by inhibiting RIGI-dependent antiviral response. Can mediate RIGI sumoylation and disrupt its polyubiquitination. The polypeptide is Mitochondrial ubiquitin ligase activator of NFKB 1 (Mul1) (Mus musculus (Mouse)).